A 245-amino-acid polypeptide reads, in one-letter code: MASPSRRLQTKPVITCFKSVLLIYTFIFWITGVILLAVGIWGKVSLENYFSLLNEKATNVPFVLIATGTVIILLGTFGCFATCRASAWMLKLYAMFLTLVFLVELVAAIVGFVFRHEIKNSFKNNYEKALKQYNSTGDYRSHAVDKIQNTLHCCGVTDYRDWTDTNYYSEKGFPKSCCKLEDCTPQRDADKVNNEGCFIKVMTIIESEMGVVAGISFGVACFQLIGIFLAYCLSRAITNNQYEIV.

Topologically, residues 1 to 19 (MASPSRRLQTKPVITCFKS) are cytoplasmic. A helical transmembrane segment spans residues 20–40 (VLLIYTFIFWITGVILLAVGI). The Extracellular portion of the chain corresponds to 41 to 59 (WGKVSLENYFSLLNEKATN). The chain crosses the membrane as a helical span at residues 60–80 (VPFVLIATGTVIILLGTFGCF). Residues 81 to 93 (ATCRASAWMLKLY) are Cytoplasmic-facing. A helical transmembrane segment spans residues 94–114 (AMFLTLVFLVELVAAIVGFVF). Over 115 to 208 (RHEIKNSFKN…IKVMTIIESE (94 aa)) the chain is Extracellular. N-linked (GlcNAc...) asparagine glycosylation is present at asparagine 134. A helical transmembrane segment spans residues 209–229 (MGVVAGISFGVACFQLIGIFL). Residues 230-245 (AYCLSRAITNNQYEIV) lie on the Cytoplasmic side of the membrane.

The protein belongs to the tetraspanin (TM4SF) family.

It is found in the membrane. The polypeptide is Tetraspanin-6 (TSPAN6) (Homo sapiens (Human)).